The primary structure comprises 160 residues: uncharacterized protein (160 aa).

4 residues coordinate Zn(2+): cysteine 26, cysteine 28, cysteine 50, and histidine 61. The GRF-type; atypical zinc finger occupies 26–69 (CWCGEEIITFTSKTKENPYRRFYRCAIAMKRENEEHLFKWVDEA).

This is an uncharacterized protein from Arabidopsis thaliana (Mouse-ear cress).